Consider the following 102-residue polypeptide: Small ribosomal subunit protein uS10 (102 aa).

The protein belongs to the universal ribosomal protein uS10 family. Part of the 30S ribosomal subunit.

Functionally, involved in the binding of tRNA to the ribosomes. The polypeptide is Small ribosomal subunit protein uS10 (Dehalococcoides mccartyi (strain ATCC BAA-2266 / KCTC 15142 / 195) (Dehalococcoides ethenogenes (strain 195))).